Here is a 270-residue protein sequence, read N- to C-terminus: Formamidopyrimidine-DNA glycosylase (270 aa).

The active-site Schiff-base intermediate with DNA is the proline 2. Glutamate 3 serves as the catalytic Proton donor. The Proton donor; for beta-elimination activity role is filled by lysine 58. Residues histidine 91, arginine 110, and arginine 151 each coordinate DNA. The segment at 236–270 (FVYGRGGEFCKVCGSTLREIRLGQRASVYCPRCQR) adopts an FPG-type zinc-finger fold. Catalysis depends on arginine 260, which acts as the Proton donor; for delta-elimination activity.

Belongs to the FPG family. In terms of assembly, monomer. The cofactor is Zn(2+).

The enzyme catalyses Hydrolysis of DNA containing ring-opened 7-methylguanine residues, releasing 2,6-diamino-4-hydroxy-5-(N-methyl)formamidopyrimidine.. The catalysed reaction is 2'-deoxyribonucleotide-(2'-deoxyribose 5'-phosphate)-2'-deoxyribonucleotide-DNA = a 3'-end 2'-deoxyribonucleotide-(2,3-dehydro-2,3-deoxyribose 5'-phosphate)-DNA + a 5'-end 5'-phospho-2'-deoxyribonucleoside-DNA + H(+). Involved in base excision repair of DNA damaged by oxidation or by mutagenic agents. Acts as a DNA glycosylase that recognizes and removes damaged bases. Has a preference for oxidized purines, such as 7,8-dihydro-8-oxoguanine (8-oxoG). Has AP (apurinic/apyrimidinic) lyase activity and introduces nicks in the DNA strand. Cleaves the DNA backbone by beta-delta elimination to generate a single-strand break at the site of the removed base with both 3'- and 5'-phosphates. This Pseudomonas aeruginosa (strain LESB58) protein is Formamidopyrimidine-DNA glycosylase.